The following is a 430-amino-acid chain: Adenylosuccinate synthetase (430 aa).

GTP-binding positions include 12-18 (GDEGKGK) and 40-42 (GHT). The active-site Proton acceptor is the D13. Mg(2+) contacts are provided by D13 and G40. IMP contacts are provided by residues 13–16 (DEGK), 38–41 (NAGH), T128, R142, Q223, T238, and R302. H41 (proton donor) is an active-site residue. Substrate is bound at residue 298–304 (TTTGRPR). Residues R304, 330 to 332 (SID), and 412 to 414 (SVG) each bind GTP.

This sequence belongs to the adenylosuccinate synthetase family. As to quaternary structure, homodimer. Requires Mg(2+) as cofactor.

It localises to the cytoplasm. It catalyses the reaction IMP + L-aspartate + GTP = N(6)-(1,2-dicarboxyethyl)-AMP + GDP + phosphate + 2 H(+). Its pathway is purine metabolism; AMP biosynthesis via de novo pathway; AMP from IMP: step 1/2. Functionally, plays an important role in the de novo pathway of purine nucleotide biosynthesis. Catalyzes the first committed step in the biosynthesis of AMP from IMP. The protein is Adenylosuccinate synthetase of Bacillus licheniformis (strain ATCC 14580 / DSM 13 / JCM 2505 / CCUG 7422 / NBRC 12200 / NCIMB 9375 / NCTC 10341 / NRRL NRS-1264 / Gibson 46).